Consider the following 417-residue polypeptide: COP9 signalosome complex subunit 7a (417 aa).

In terms of domain architecture, PCI spans 2–179 (EQTKALNALE…EMVQINSVAA (178 aa)). Residues 240–417 (DEQKGAVPSS…KRGSKRKLTA (178 aa)) form a disordered region. Over residues 263 to 290 (RGGGGGGDGAGAGGSFRGSGYSRGGGLS) the composition is skewed to gly residues. Low complexity-rich tracts occupy residues 291–311 (QGYRSSQRGSHQQHQNQSRQQ), 320–330 (SNQSGTNSLLT), and 343–352 (PSAVSPSAAA). A compositionally biased stretch (gly residues) spans 367-379 (METGSGSGSGPLG). Acidic residues predominate over residues 385 to 405 (DMDDSEEDIDDDTMDLDDEGD).

This sequence belongs to the CSN7/EIF3M family. CSN7 subfamily. In terms of assembly, component of the COP9 signalosome (CSN) complex.

It localises to the cytoplasm. The protein resides in the nucleus. Component of the COP9 signalosome (CSN) complex that acts as an regulator of the ubiquitin (Ubl) conjugation pathway by mediating the deneddylation of the cullin subunit of SCF-type E3 ubiquitin-protein ligase complexes. The CSN complex is involved in the regulation of the circadian clock through its control of the stability of the SCF(FWD1) complex. The protein is COP9 signalosome complex subunit 7a (csn-7a) of Neurospora crassa (strain ATCC 24698 / 74-OR23-1A / CBS 708.71 / DSM 1257 / FGSC 987).